A 243-amino-acid chain; its full sequence is Cell division protein ZipA (243 aa).

Over 1–4 (MSDM) the chain is Periplasmic. Residues 5-25 (AMIRIGILIAGLLLVAAIFLF) form a helical membrane-spanning segment. Over 26–243 (GRPKKSPQGR…APPLTKSPRW (218 aa)) the chain is Cytoplasmic. A disordered region spans residues 30–89 (KSPQGRRVDKGEGQPRERREPVISSEFGAEGDAAERAEGVEQSELNLEGQDASGGNEVGK). A compositionally biased stretch (basic and acidic residues) spans 35-50 (RRVDKGEGQPRERREP).

Belongs to the ZipA family. As to quaternary structure, interacts with FtsZ via their C-terminal domains.

The protein localises to the cell inner membrane. Essential cell division protein that stabilizes the FtsZ protofilaments by cross-linking them and that serves as a cytoplasmic membrane anchor for the Z ring. Also required for the recruitment to the septal ring of downstream cell division proteins. The protein is Cell division protein ZipA of Xanthomonas axonopodis pv. citri (strain 306).